The chain runs to 2474 residues: MDPVYVDIDADSAFLKALQRAYPMFEVEPRQVTPNDHANARAFSHLAIKLIEQEIDPDSTILDIGSAPARRMMSDRKYHCVCPMRSAEDPERLANYARKLASAAGKVLDRNISGKIGDLQAVMAVPDTETPTFCLHTDVSCRQRADVAIYQDVYAVHAPTSLYHQAIKGVRLAYWVGFDTTPFMYNAMAGAYPSYSTNWADEQVLKAKNIGLCSTDLTEGRRGKLSIMRGKKLEPCDRVLFSVGSTLYPESRKLLKSWHLPSVFHLKGKLSFTCRCDTVVSCEGYVVKRITMSPGLYGKTTGYAVTHHADGFLMCKTTDTVDGERVSFSVCTYVPATICDQMTGILATEVTPEDAQKLLVGLNQRIVVNGRTQRNTNTMKNYMIPVVAQAFSKWAKECRKDMEDEKLLGVRERTLTCCCLWAFKKQKTHTVYKRPDTQSIQKVQAEFDSFVVPSLWSSGLSIPLRTRIKWLLSKVPKTDLTPYSGDAQEARDAEKEAEEEREAELTLEALPPLQAAQEDVQVEIDVEQLEDRAGAGIIETPRGAIKVTAQPTDHVVGEYLVLSPQTVLRSQKLSLIHALAEQVKTCTHSGRAGRYAVEAYDGRVLVPSGYAISPEDFQSLSESATMVYNEREFVNRKLHHIAMHGPALNTDEESYELVRAERTEHEYVYDVDQRRCCKKEEAAGLVLVGDLTNPPYHEFAYEGLKIRPACPYKIAVIGVFGVPGSGKSAIIKNLVTRQDLVTSGKKENCQEITTDVMRQRGLEISARTVDSLLLNGCNRPVDVLYVDEAFACHSGTLLALIALVRPRQKVVLCGDPKQCGFFNMMQMKVNYNHNICTQVYHKSISRRCTLPVTAIVSSLHYEGKMRTTNEYNKPIVVDTTGSTKPDPGDLVLTCFRGWVKQLQIDYRGHEVMTAAASQGLTRKGVYAVRQKVNENPLYASTSEHVNVLLTRTEGKLVWKTLSGDPWIKTLQNPPKGNFKATIKEWEVEHASIMAGICSHQMTFDTFQNKANVCWAKSLVPILETAGIKLNDRQWSQIIQAFKEDKAYSPEVALNEICTRMYGVDLDSGLFSKPLVSVYYADNHWDNRPGGKMFGFNPEAASILERKYPFTKGKWNINKQICVTTRRIEDFNPTTNIIPANRRLPHSLVAEHRPVKGERMEWLVNKINGHHVLLVSGCSLALPTKRVTWVAPLGVRGADYTYNLELGLPATLGRYDLVVINIHTPFRIHHYQQCVDHAMKLQMLGGDSLRLLKPGGSLLIRAYGYADRTSERVICVLGRKFRSSRALKPPCVTSNTEMFFLFSNFDNGRRNFTTHVMNNQLNAAFVGQATRAGCAPSYRVKRMDIAKNDEECVVNAANPRGLPGDGVCKAVYKKWPESFKNSATPVGTAKTVMCGTYPVIHAVGPNFSNYSESEGDRELAAAYREVAKEVTRLGVNSVAIPLLSTGVYSGGKDRLTQSLNHLFTAMDSTDADVVIYCRDKEWEKKISEAIQMRTQVELLDEHISIDCDVVRVHPDSSLAGRKGYSTTEGALYSYLEGTRFHQTAVDMAEIYTMWPKQTEANEQVCLYALGESIESIRQKCPVDDADASSPPKTVPCLCRYAMTPERVTRLRMNHVTSIIVCSSFPLPKYKIEGVQKVKCSKVMLFDHNVPSRVSPREYRPSQESVQEASTTTSLTHSQFDLSVDGKILPVPSDLDADAPALEPALDDGAIHTLPSATGNLAAVSDWVMSTVPVAPPRRRRGRNLTVTCDEREGNITPMASVRFFRAELCPVVQETAETRDTAMSLQAPPSTATELSHPPISFGAPSETFPITFGDFNEGEIESLSSELLTFGDFLPGEVDDLTDSDWSTCSDTDDELRLDRAGGYIFSSDTGPGHLQQKSVRQSVLPVNTLEEVHEEKCYPPKLDEAKEQLLLKKLQESASMANRSRYQSRKVENMKATIIQRLKRGCRLYLMSETPKVPTYRTTYPAPVYSPPINVRLSNPESAVAACNEFLARNYPTVSSYQITDEYDAYLDMVDGSESCLDRATFNPSKLRSYPKQHAYHAPSIRSAVPSPFQNTLQNVLAAATKRNCNVTQMRELPTLDSAVFNVECFKKFACNQEYWEEFAASPIRITTENLTTYVTKLKGPKAAALFAKTHNLLPLQEVPMDRFTVDMKRDVKVTPGTKHTEERPKVQVIQAAEPLATAYLCGIHRELVRRLNAVLLPNVHTLFDMSAEDFDAIIAAHFKPGDTVLETDIASFDKSQDDSLALTALMLLEDLGVDHSLLDLIEAAFGEISSCHLPTGTRFKFGAMMKSGMFLTLFVNTLLNITIASRVLEDRLTKSACAAFIGDDNIIHGVVSDELMAARCATWMNMEVKIIDAVVSQKAPYFCGGFILHDIVTGTACRVADPLKRLFKLGKPLAAGDEQDEDRRRALADEVVRWQRTGLIDELEKAVYSRYEVQGISVVVMSMATFASSRSNFEKLRGPVVTLYGGPK.

The 232-residue stretch at 28-259 (EPRQVTPNDH…ESRKLLKSWH (232 aa)) folds into the Alphavirus-like MT domain. Residue His-37 is the For mRNA-capping enzyme nsP1 activity of the active site. 4 residues coordinate Zn(2+): His-79, Glu-129, Cys-134, and Cys-141. The membrane-binding and oligomerization stretch occupies residues 295–450 (GLYGKTTGYA…QKVQAEFDSF (156 aa)). S-palmitoyl cysteine; by host attachment occurs at residues Cys-417 and Cys-419. Positions 482-502 (PYSGDAQEARDAEKEAEEERE) are disordered. Residues 690-842 (DLTNPPYHEF…HNICTQVYHK (153 aa)) form the (+)RNA virus helicase ATP-binding domain. Position 721–728 (721–728 (GVPGSGKS)) interacts with a ribonucleoside 5'-triphosphate. A (+)RNA virus helicase C-terminal domain is found at 843-991 (SISRRCTLPV…IKEWEVEHAS (149 aa)). One can recognise a Peptidase C9 domain in the interval 1004–1327 (DTFQNKANVC…NQLNAAFVGQ (324 aa)). Residues 1005–1024 (TFQNKANVCWAKSLVPILET) form a nucleolus localization signal region. Residue Cys-1013 is the For cysteine protease nsP2 activity of the active site. A Nuclear export signal motif is present at residues 1058-1067 (TRMYGVDLDS). The For cysteine protease nsP2 activity role is filled by His-1083. Positions 1182-1186 (PTKRV) match the Nuclear localization signal motif. The region spanning 1334–1493 (APSYRVKRMD…KISEAIQMRT (160 aa)) is the Macro domain. ADP-D-ribose-binding residues include Asp-1343, Asn-1357, Gly-1365, Gly-1445, Val-1446, and Tyr-1447. Positions 1595, 1597, 1620, and 1638 each coordinate Zn(2+). Positions 1651-1672 (RVSPREYRPSQESVQEASTTTS) are disordered. The tract at residues 1659–1857 (PSQESVQEAS…TCSDTDDELR (199 aa)) is HVD. A compositionally biased stretch (polar residues) spans 1660-1672 (SQESVQEASTTTS). 2 interaction with host CD2AP regions span residues 1726–1739 (VMSTVPVAPPRRRR) and 1756–1767 (PMASVRFFRAEL). Positions 1745–1793 (VTCDEREGNITPMASVRFFRAELCPVVQETAETRDTAMSLQAPPSTATE) are interaction with host FHL1. The short motif at 1812–1815 (FGDF) is the FGDF; binding to host G3BP1 element. The interval 1820–1828 (IESLSSELL) is interaction with host CD2AP. The FGDF; binding to host G3BP1 motif lies at 1830–1833 (FGDF). One can recognise a RdRp catalytic domain in the interval 2228-2343 (DTVLETDIAS…HGVVSDELMA (116 aa)).

In terms of assembly, homododecamer. The enzyme forms a membrane-associated dodecameric ring with a central channel for the exchange of between the viral replication factories and the host cytoplasm. Interacts with non-structural protein 3. Interacts with RNA-directed RNA polymerase nsP4. Interacts with protease nsP2. Interacts with itself. Interacts with host STING1; this interaction results in inhibition of cGAS-STING signaling and increased levels of palmitoylation and protein stabilization of nsP1. Interacts with host TMEM45B; this interaction leads to viral replication inhibition. Interacts with mRNA-capping enzyme nsP1. Interacts (via C-terminus) with host G3BP1; this interaction inhibits the formation of host stress granules on viral mRNAs and the nsp3-G3BP1 complexes bind viral RNAs and probably orchestrate the assembly of viral replication complexes. Interacts (via C-terminus) with host G3BP2; this interaction inhibits the formation of host stress granules on viral mRNAs and the nsp3-G3BP2 complexes bind viral RNAs and probably orchestrate the assembly of viral replication complexes. Interacts (via C-terminus) with host NAP1L1. Interacts (via C-terminus) with host NAP1L4. Interacts (via C-terminus) with host DHX9; this interaction allows the recruitment of DHX9 to the plasma membrane, where it associates with viral replication complexes and may play a role in the translation-to-replication switch. Interacts (via C-terminus) with host FHL1 (via LIM domain 1); this interaction is required for viral RNA replication. Interacts (via C-terminus) with host CD2AP; this interaction plays a role in initiation of viral replication. Interacts (via C-terminus) with host SH3KBP1; this interaction plays a role in initiation of viral replication. As to quaternary structure, interacts with mRNA-capping enzyme nsP1. Interacts with protease nsP2. interacts with itself. Interacts with host TMEM45B; this interaction leads to viral replication inhibition. In terms of assembly, interacts with RNA-directed RNA polymerase nsP4. Interacts with mRNA-capping enzyme nsP1. Interacts with KPNA1/karyopherin-alpha1; this interaction probably allows the active transport of protease nsP2 into the host nucleus. Mg(2+) serves as cofactor. The cofactor is Mn(2+). In terms of processing, specific enzymatic cleavages in vivo yield mature proteins. The processing of the polyprotein is temporally regulated. In early stages (1.7 hpi), P1234 is first cleaved in trans through its nsP2 protease activity, releasing P123 and nsP4, which associate to form the early replication complex. At the same time, P1234 is also cut at the nsP1/nsP2 site early in infection but with lower efficiency. After replication of the viral minus-strand RNAs (4 hpi), the polyproteins are cut at the nsP1/nsP2 and nsP2/nsP3 sites very efficiently, preventing accumulation of P123 and P1234 and allowing the formation of the late replication complex. NsP3/nsP4 site is not cleaved anymore and P34 is produced rather than nsP4. Specific enzymatic cleavages in vivo yield mature proteins. The processing of the polyprotein is temporally regulated. In early stages (1.7 hpi), P123 is cleaved at the nsP1/nsP2 site with low efficiency. After replication of the viral minus-strand RNAs (4 hpi), the polyproteins are cut at the nsP1/nsP2 and nsP2/nsP3 sites very efficiently, preventing accumulation of P123 and allowing the formation of the late replication complex. Post-translationally, palmitoylated by host palmitoyltransferases ZDHHC2 and ZDHHC19. Palmitoylation is increased by the interacton with host STING1. In terms of processing, phosphorylated by host on serines and threonines. Ubiquitinated; targets the protein for rapid degradation via the ubiquitin system. Nsp4 is present in extremely low quantities due to low frequency of translation through the amber stop-codon and the degradation by the ubiquitin pathway.

It localises to the host cytoplasmic vesicle membrane. It is found in the host cell membrane. Its subcellular location is the host cell projection. The protein localises to the host filopodium. The protein resides in the host nucleus. It localises to the host cytoplasm. It catalyses the reaction GTP + S-adenosyl-L-methionine = N(7)-methyl-GTP + S-adenosyl-L-homocysteine. The catalysed reaction is N(7)-methyl-GTP + L-histidyl-[protein] = N(tele)-(N(7)-methylguanosine 5'-phospho)-L-histidyl-[protein] + diphosphate. It carries out the reaction N(tele)-(N(7)-methylguanosine 5'-phospho)-L-histidyl-[protein] + a 5'-end diphospho-(purine-ribonucleoside) in mRNA + H(+) = a 5'-end (N(7)-methyl 5'-triphosphoguanosine)-(purine-ribonucleoside) in mRNA + L-histidyl-[protein]. The enzyme catalyses a 5'-end triphospho-ribonucleoside in mRNA + H2O = a 5'-end diphospho-ribonucleoside in mRNA + phosphate + H(+). It catalyses the reaction a ribonucleoside 5'-triphosphate + H2O = a ribonucleoside 5'-diphosphate + phosphate + H(+). The catalysed reaction is ATP + H2O = ADP + phosphate + H(+). It carries out the reaction RNA(n) + a ribonucleoside 5'-triphosphate = RNA(n+1) + diphosphate. The enzyme catalyses 4-O-(ADP-D-ribosyl)-L-aspartyl-[protein] + H2O = L-aspartyl-[protein] + ADP-D-ribose + H(+). It catalyses the reaction 5-O-(ADP-D-ribosyl)-L-glutamyl-[protein] + H2O = L-glutamyl-[protein] + ADP-D-ribose + H(+). The catalysed reaction is RNA(n) + ATP = RNA(n)-3'-adenine ribonucleotide + diphosphate. It carries out the reaction ADP-alpha-D-ribose 1''-phosphate + H2O = ADP-D-ribose + phosphate. Functionally, inactive precursor of the viral replicase, which is activated by cleavages carried out by the viral protease nsP2. In terms of biological role, the early replication complex formed by the polyprotein P123 and nsP4 synthesizes minus-strand RNAs. As soon P123 is cleaved into mature proteins, the plus-strand RNAs synthesis begins. Cytoplasmic capping enzyme that catalyzes two virus-specific reactions: methyltransferase and guanylyltransferase. mRNA-capping is necessary since all viral RNAs are synthesized in the cytoplasm, and host capping enzymes are restricted to the nucleus. The enzymatic reaction involves a covalent link between 7-methyl-GMP and nsP1, whereas eukaryotic capping enzymes form a covalent complex only with GMP. nsP1 capping consists in the following reactions: GTP is first methylated into 7-methyl-GMP and then is covalently linked to nsP1 to form the m7GMp-nsP1 complex from which 7-methyl-GMP complex is transferred to the mRNA to create the cap structure. NsP1 is also needed for the initiation of the minus-strand RNAs synthesis. At the initiation of virus replication, mediates the assembly of the viral replication complex made of the non-structural proteins, the association of this complex with the inner face of the plasma membrane and the formation of membranous spherules that serve as replication complex factories. Forms the neck of these spherules with a central channel for mediating communication and the passage of RNA, nucleotides, and small proteins between the viral replication complex and the host cytoplasm. Palmitoylated nsP1 is remodeling host cell cytoskeleton, and induces filopodium-like structure formation at the surface of the host cell. Its function is as follows. Multifunctional protein whose N-terminus is part of the RNA polymerase complex and displays NTPase, RNA triphosphatase and helicase activities. NTPase and RNA triphosphatase are involved in viral RNA capping and helicase keeps a check on the dsRNA replication intermediates. The C-terminus harbors a protease that specifically cleaves the polyproteins and releases the mature proteins. Required for the shutoff of minus-strand RNAs synthesis. Specifically inhibits the host IFN response by promoting the nuclear export of host STAT1. Also inhibits host transcription by inducing the rapid proteasome-dependent degradation of POLR2A, a catalytic subunit of the RNAPII complex. The resulting inhibition of cellular protein synthesis serves to ensure maximal viral gene expression and to evade host immune response. Functionally, seems to be essential for minus-strand RNAs and subgenomic 26S mRNAs synthesis. Displays mono-ADP-ribosylhydrolase activity. ADP-ribosylation is a post-translational modification that controls various processes of the host cell and the virus probably needs to revert it for optimal viral replication. Binds proteins of G3BP family and sequesters them into the viral RNA replication complexes thereby inhibiting the formation of host stress granules on viral mRNAs. The nsp3-G3BP complexes bind viral RNAs and probably orchestrate the assembly of viral replication complexes, thanks to the ability of G3BP family members to self-assemble and bind DNA. In terms of biological role, RNA dependent RNA polymerase. Replicates genomic and antigenomic RNA by recognizing replications specific signals. The early replication complex formed by the polyprotein P123 and nsP4 synthesizes minus-strand RNAs. The late replication complex composed of fully processed nsP1-nsP4 is responsible for the production of genomic and subgenomic plus-strand RNAs. The polypeptide is Polyprotein P1234 (Chikungunya virus (strain S27-African prototype) (CHIKV)).